A 30-amino-acid polypeptide reads, in one-letter code: Cycloviolacin-O9 (30 aa).

Residues 1-30 constitute a cross-link (cyclopeptide (Gly-Asn)); the sequence is GIPCGESCVWIPCLTSAVGCSCKSKVCYRN. Intrachain disulfides connect C4/C20, C8/C22, and C13/C27.

In terms of processing, this is a cyclic peptide.

Its function is as follows. Probably participates in a plant defense mechanism. The polypeptide is Cycloviolacin-O9 (Viola odorata (Sweet violet)).